The sequence spans 494 residues: Glycerol kinase 1 (494 aa).

Position 12 (threonine 12) interacts with ADP. Threonine 12, threonine 13, and serine 14 together coordinate ATP. Residue threonine 12 coordinates sn-glycerol 3-phosphate. Arginine 16 is a binding site for ADP. Residues arginine 82, glutamate 83, tyrosine 134, and aspartate 243 each coordinate sn-glycerol 3-phosphate. Glycerol-binding residues include arginine 82, glutamate 83, tyrosine 134, aspartate 243, and glutamine 244. Residues threonine 265 and glycine 308 each contribute to the ADP site. 4 residues coordinate ATP: threonine 265, glycine 308, glutamine 312, and glycine 408. ADP contacts are provided by glycine 408 and asparagine 412.

It belongs to the FGGY kinase family.

The catalysed reaction is glycerol + ATP = sn-glycerol 3-phosphate + ADP + H(+). The protein operates within polyol metabolism; glycerol degradation via glycerol kinase pathway; sn-glycerol 3-phosphate from glycerol: step 1/1. With respect to regulation, inhibited by fructose 1,6-bisphosphate (FBP). Functionally, key enzyme in the regulation of glycerol uptake and metabolism. Catalyzes the phosphorylation of glycerol to yield sn-glycerol 3-phosphate. The polypeptide is Glycerol kinase 1 (Pseudomonas aeruginosa (strain ATCC 15692 / DSM 22644 / CIP 104116 / JCM 14847 / LMG 12228 / 1C / PRS 101 / PAO1)).